Here is a 1464-residue protein sequence, read N- to C-terminus: Gag-Pol polyprotein (1464 aa).

Residue glycine 2 is the site of N-myristoyl glycine; by host attachment. The tract at residues 7 to 31 is interaction with Gp41; the sequence is VLSGKKTDELEKVRLRPGGKKRYML. Residues 16 to 22 carry the Nuclear export signal motif; it reads LEKVRLR. A Nuclear localization signal motif is present at residues 26–32; that stretch reads KKRYMLK. The residue at position 130 (tyrosine 130) is a Phosphotyrosine; by host. An interaction with human PPIA/CYPA and NUP153 region spans residues 186 to 223; the sequence is NCVGEHQAAMQIIREIINEEAADWDQQHPSPGPMPAGQ. The segment at 274–360 is dimerization/Multimerization of capsid protein p24; sequence YNPTNILDIK…GGPGQKARLM (87 aa). 2 CCHC-type zinc fingers span residues 387-404 and 408-425; these read VTCW…QCKA and QGCW…KCPE. Residues 483–499 show a composition bias toward basic and acidic residues; it reads AKELHATREEAEGEQRE. Positions 483 to 504 are disordered; sequence AKELHATREEAEGEQRETLQGG. Residues 511–515 are dimerization of protease; sequence PQFSL. Residues 531-600 form the Peptidase A2 domain; it reads EVLLDTGADD…PINIFGRNIL (70 aa). The For protease activity; shared with dimeric partner role is filled by aspartate 535. Dimerization of protease stretches follow at residues 559 to 565 and 598 to 610; these read GIGGFIN and NILN…LNFP. One can recognise a Reverse transcriptase domain in the interval 654–844; the sequence is GQLEEAPPTN…PFKWMGYELW (191 aa). Mg(2+)-binding residues include aspartate 719, aspartate 794, and aspartate 795. Positions 836–844 are RT 'primer grip'; sequence FKWMGYELW. The Tryptophan repeat motif signature appears at 1006–1022; that stretch reads WDQWWTDYWQVTWIPEW. Positions 1042–1165 constitute an RNase H type-1 domain; the sequence is LEGVETYYTD…VDHLVSQGIR (124 aa). Aspartate 1051, glutamate 1086, aspartate 1106, and aspartate 1157 together coordinate Mg(2+). An Integrase-type zinc finger spans residues 1171–1212; it reads EKIEPAQEEHEKYHNNVKELVHKFGIPQLVARQIVNSCDKCQ. 4 residues coordinate Zn(2+): histidine 1180, histidine 1184, cysteine 1208, and cysteine 1211. An Integrase catalytic domain is found at 1222–1373; sequence VNSELGTWQM…PAERIVNMIT (152 aa). The Mg(2+) site is built by aspartate 1232, aspartate 1284, and glutamate 1320. A DNA-binding region (integrase-type) is located at residues 1391–1438; the sequence is FRVYYREGRDQLWKGPGDLLWKGEGAVIIKVGTEIKVIPRRKAKIIRN.

Homotrimer; further assembles as hexamers of trimers. Interacts with gp41 (via C-terminus). Interacts with host CALM1; this interaction induces a conformational change in the Matrix protein, triggering exposure of the myristate group. Interacts with host AP3D1; this interaction allows the polyprotein trafficking to multivesicular bodies during virus assembly. Part of the pre-integration complex (PIC) which is composed of viral genome, matrix protein, Vpr and integrase. As to quaternary structure, homodimer; the homodimer further multimerizes as homohexamers or homopentamers. Interacts with human PPIA/CYPA. Interacts with human NUP153. Interacts with host PDZD8; this interaction stabilizes the capsid. Interacts with monkey TRIM5; this interaction destabilizes the capsid. In terms of assembly, homodimer, whose active site consists of two apposed aspartic acid residues. Heterodimer of p66 RT and p51 RT (RT p66/p51). Heterodimerization of RT is essential for DNA polymerase activity. The overall folding of the subdomains is similar in p66 RT and p51 RT but the spatial arrangements of the subdomains are dramatically different. As to quaternary structure, homotetramer; may further associate as a homohexadecamer. Part of the pre-integration complex (PIC) which is composed of viral genome, matrix protein, Vpr and integrase. Interacts with human SMARCB1/INI1 and human PSIP1/LEDGF isoform 1. Interacts with human KPNA3; this interaction might play a role in nuclear import of the pre-integration complex. Interacts with human NUP153; this interaction might play a role in nuclear import of the pre-integration complex. Mg(2+) is required as a cofactor. Specific enzymatic cleavages by the viral protease yield mature proteins. The protease is released by autocatalytic cleavage. The polyprotein is cleaved during and after budding, this process is termed maturation. Proteolytic cleavage of p66 RT removes the RNase H domain to yield the p51 RT subunit. Nucleocapsid protein p7 might be further cleaved after virus entry.

It is found in the host cell membrane. Its subcellular location is the host endosome. The protein localises to the host multivesicular body. The protein resides in the virion membrane. It localises to the host nucleus. It is found in the host cytoplasm. Its subcellular location is the virion. It catalyses the reaction Endopeptidase for which the P1 residue is preferably hydrophobic.. The enzyme catalyses Endohydrolysis of RNA in RNA/DNA hybrids. Three different cleavage modes: 1. sequence-specific internal cleavage of RNA. Human immunodeficiency virus type 1 and Moloney murine leukemia virus enzymes prefer to cleave the RNA strand one nucleotide away from the RNA-DNA junction. 2. RNA 5'-end directed cleavage 13-19 nucleotides from the RNA end. 3. DNA 3'-end directed cleavage 15-20 nucleotides away from the primer terminus.. It carries out the reaction 3'-end directed exonucleolytic cleavage of viral RNA-DNA hybrid.. The catalysed reaction is DNA(n) + a 2'-deoxyribonucleoside 5'-triphosphate = DNA(n+1) + diphosphate. With respect to regulation, protease: The viral protease is inhibited by many synthetic protease inhibitors (PIs), such as amprenavir, atazanavir, indinavir, loprinavir, nelfinavir, ritonavir and saquinavir. Use of protease inhibitors in tritherapy regimens permit more ambitious therapeutic strategies. Reverse transcriptase/ribonuclease H: RT can be inhibited either by nucleoside RT inhibitors (NRTIs) or by non nucleoside RT inhibitors (NNRTIs). NRTIs act as chain terminators, whereas NNRTIs inhibit DNA polymerization by binding a small hydrophobic pocket near the RT active site and inducing an allosteric change in this region. Classical NRTIs are abacavir, adefovir (PMEA), didanosine (ddI), lamivudine (3TC), stavudine (d4T), tenofovir (PMPA), zalcitabine (ddC), and zidovudine (AZT). Classical NNRTIs are atevirdine (BHAP U-87201E), delavirdine, efavirenz (DMP-266), emivirine (I-EBU), and nevirapine (BI-RG-587). The tritherapies used as a basic effective treatment of AIDS associate two NRTIs and one NNRTI. In terms of biological role, mediates, with Gag polyprotein, the essential events in virion assembly, including binding the plasma membrane, making the protein-protein interactions necessary to create spherical particles, recruiting the viral Env proteins, and packaging the genomic RNA via direct interactions with the RNA packaging sequence (Psi). Gag-Pol polyprotein may regulate its own translation, by the binding genomic RNA in the 5'-UTR. At low concentration, the polyprotein would promote translation, whereas at high concentration, the polyprotein would encapsidate genomic RNA and then shut off translation. Targets the polyprotein to the plasma membrane via a multipartite membrane-binding signal, that includes its myristoylated N-terminus. Matrix protein is part of the pre-integration complex. Implicated in the release from host cell mediated by Vpu. Binds to RNA. Its function is as follows. Forms the conical core that encapsulates the genomic RNA-nucleocapsid complex in the virion. Most core are conical, with only 7% tubular. The core is constituted by capsid protein hexamer subunits. The core is disassembled soon after virion entry. Host restriction factors such as TRIM5-alpha or TRIMCyp bind retroviral capsids and cause premature capsid disassembly, leading to blocks in reverse transcription. Capsid restriction by TRIM5 is one of the factors which restricts HIV-1 to the human species. Host PIN1 apparently facilitates the virion uncoating. On the other hand, interactions with PDZD8 or CYPA stabilize the capsid. Functionally, encapsulates and protects viral dimeric unspliced genomic RNA (gRNA). Binds these RNAs through its zinc fingers. Acts as a nucleic acid chaperone which is involved in rearangement of nucleic acid secondary structure during gRNA retrotranscription. Also facilitates template switch leading to recombination. As part of the polyprotein, participates in gRNA dimerization, packaging, tRNA incorporation and virion assembly. In terms of biological role, aspartyl protease that mediates proteolytic cleavages of Gag and Gag-Pol polyproteins during or shortly after the release of the virion from the plasma membrane. Cleavages take place as an ordered, step-wise cascade to yield mature proteins. This process is called maturation. Displays maximal activity during the budding process just prior to particle release from the cell. Also cleaves Nef and Vif, probably concomitantly with viral structural proteins on maturation of virus particles. Hydrolyzes host EIF4GI and PABP1 in order to shut off the capped cellular mRNA translation. The resulting inhibition of cellular protein synthesis serves to ensure maximal viral gene expression and to evade host immune response. Multifunctional enzyme that converts the viral RNA genome into dsDNA in the cytoplasm, shortly after virus entry into the cell. This enzyme displays a DNA polymerase activity that can copy either DNA or RNA templates, and a ribonuclease H (RNase H) activity that cleaves the RNA strand of RNA-DNA heteroduplexes in a partially processive 3' to 5' endonucleasic mode. Conversion of viral genomic RNA into dsDNA requires many steps. A tRNA(3)-Lys binds to the primer-binding site (PBS) situated at the 5'-end of the viral RNA. RT uses the 3' end of the tRNA primer to perform a short round of RNA-dependent minus-strand DNA synthesis. The reading proceeds through the U5 region and ends after the repeated (R) region which is present at both ends of viral RNA. The portion of the RNA-DNA heteroduplex is digested by the RNase H, resulting in a ssDNA product attached to the tRNA primer. This ssDNA/tRNA hybridizes with the identical R region situated at the 3' end of viral RNA. This template exchange, known as minus-strand DNA strong stop transfer, can be either intra- or intermolecular. RT uses the 3' end of this newly synthesized short ssDNA to perform the RNA-dependent minus-strand DNA synthesis of the whole template. RNase H digests the RNA template except for two polypurine tracts (PPTs) situated at the 5'-end and near the center of the genome. It is not clear if both polymerase and RNase H activities are simultaneous. RNase H probably can proceed both in a polymerase-dependent (RNA cut into small fragments by the same RT performing DNA synthesis) and a polymerase-independent mode (cleavage of remaining RNA fragments by free RTs). Secondly, RT performs DNA-directed plus-strand DNA synthesis using the PPTs that have not been removed by RNase H as primers. PPTs and tRNA primers are then removed by RNase H. The 3' and 5' ssDNA PBS regions hybridize to form a circular dsDNA intermediate. Strand displacement synthesis by RT to the PBS and PPT ends produces a blunt ended, linear dsDNA copy of the viral genome that includes long terminal repeats (LTRs) at both ends. Its function is as follows. Catalyzes viral DNA integration into the host chromosome, by performing a series of DNA cutting and joining reactions. This enzyme activity takes place after virion entry into a cell and reverse transcription of the RNA genome in dsDNA. The first step in the integration process is 3' processing. This step requires a complex comprising the viral genome, matrix protein, Vpr and integrase. This complex is called the pre-integration complex (PIC). The integrase protein removes 2 nucleotides from each 3' end of the viral DNA, leaving recessed CA OH's at the 3' ends. In the second step, the PIC enters cell nucleus. This process is mediated through integrase and Vpr proteins, and allows the virus to infect a non dividing cell. This ability to enter the nucleus is specific of lentiviruses, other retroviruses cannot and rely on cell division to access cell chromosomes. In the third step, termed strand transfer, the integrase protein joins the previously processed 3' ends to the 5' ends of strands of target cellular DNA at the site of integration. The 5'-ends are produced by integrase-catalyzed staggered cuts, 5 bp apart. A Y-shaped, gapped, recombination intermediate results, with the 5'-ends of the viral DNA strands and the 3' ends of target DNA strands remaining unjoined, flanking a gap of 5 bp. The last step is viral DNA integration into host chromosome. This involves host DNA repair synthesis in which the 5 bp gaps between the unjoined strands are filled in and then ligated. Since this process occurs at both cuts flanking the HIV genome, a 5 bp duplication of host DNA is produced at the ends of HIV-1 integration. Alternatively, Integrase may catalyze the excision of viral DNA just after strand transfer, this is termed disintegration. In Human immunodeficiency virus type 2 subtype B (isolate EHO) (HIV-2), this protein is Gag-Pol polyprotein (gag-pol).